The following is a 115-amino-acid chain: Biotrophy-associated secreted protein 1 (115 aa).

The N-terminal stretch at 1–22 is a signal peptide; that stretch reads MHVFNFAALFTVLATFTATAAA. The segment at 24–115 is disordered; it reads DQGSNTFDQR…GIRRVENYYP (92 aa). Composition is skewed to basic and acidic residues over residues 46–55 and 91–115; these read IREEKQENVG and QQKE…NYYP.

It is found in the secreted. It localises to the host cytoplasm. Its function is as follows. Secreted effector involved in biotrophic colonization of plant cells. Induces an early, basal defense response in susceptible rice, including rapid callose deposition and ROS production in leaves and calli. Also promotes sporulation and mycelia growth suggesting a role across the whole process of interaction, from the biotrophic phase to sporulation. The protein is Biotrophy-associated secreted protein 1 of Pyricularia oryzae (strain 70-15 / ATCC MYA-4617 / FGSC 8958) (Rice blast fungus).